Reading from the N-terminus, the 1201-residue chain is Kinesin-like protein costa (1201 aa).

Residues proline 4 to valine 391 enclose the Kinesin motor domain. The disordered stretch occupies residues serine 23 to tyrosine 92. A compositionally biased stretch (basic and acidic residues) spans glutamate 28–asparagine 56. The segment covering proline 57–aspartate 75 has biased composition (polar residues). Glycine 175–serine 182 lines the ATP pocket. Disordered stretches follow at residues alanine 502 to aspartate 536, histidine 565 to leucine 606, and alanine 618 to serine 639. The span at serine 510–aspartate 521 shows a compositional bias: low complexity. Serine 599 and serine 605 each carry phosphoserine. Coiled-coil stretches lie at residues alanine 652–lysine 821 and threonine 968–leucine 1001.

Belongs to the TRAFAC class myosin-kinesin ATPase superfamily. Kinesin family. KIF27 subfamily. As to quaternary structure, homodimer (Potential). Binds microtubules. Interacts with ci, smo, sgg, CkIalpha and protein kinase A catalytic subunit. Interacts (via kinesin motor domain) with Ubr3. Polyubiquitinated by Ubr3, which leads to proteasomal degradation.

It localises to the cytoplasm. The protein localises to the cytoskeleton. Functionally, regulates cubitus interruptus (ci) processing by recruiting multiple kinases to promote its efficient phosphorylation. Scaffolds multiple kinases and ci into proximity to promote its hyperphosphorylation, which then targets it for SCFSlimb/proteasome-mediated processing to generate its repressor form. Hh signaling inhibits ci phosphorylation by interfering with the cos-ci-kinases complex formation. Negatively regulates hh-signaling pathways during various processes, including photoreceptor differentiation. May negatively regulate a hh-signaling pathway which functions in the intestinal immune response to bacterial uracil by activating the Duox-dependent production of reactive oxygen species (ROS). The sequence is that of Kinesin-like protein costa (cos) from Drosophila melanogaster (Fruit fly).